Here is an 88-residue protein sequence, read N- to C-terminus: uncharacterized protein (88 aa).

The signal sequence occupies residues 1-22 (MGLTLKEHAEVCMALAESSASA).

This is an uncharacterized protein from Haemophilus influenzae (strain ATCC 51907 / DSM 11121 / KW20 / Rd).